Reading from the N-terminus, the 289-residue chain is Acetyl-coenzyme A carboxylase carboxyl transferase subunit beta (289 aa).

Residues 28–289 enclose the CoA carboxyltransferase N-terminal domain; the sequence is VMTKCPKCKK…QGGEMAVWQS (262 aa). The Zn(2+) site is built by Cys-32, Cys-35, Cys-51, and Cys-54. Residues 32 to 54 form a C4-type zinc finger; it reads CPKCKKIMYTKEVLKNLKVCVNC.

Belongs to the AccD/PCCB family. As to quaternary structure, acetyl-CoA carboxylase is a heterohexamer composed of biotin carboxyl carrier protein (AccB), biotin carboxylase (AccC) and two subunits each of ACCase subunit alpha (AccA) and ACCase subunit beta (AccD). The cofactor is Zn(2+).

The protein resides in the cytoplasm. The enzyme catalyses N(6)-carboxybiotinyl-L-lysyl-[protein] + acetyl-CoA = N(6)-biotinyl-L-lysyl-[protein] + malonyl-CoA. It participates in lipid metabolism; malonyl-CoA biosynthesis; malonyl-CoA from acetyl-CoA: step 1/1. Component of the acetyl coenzyme A carboxylase (ACC) complex. Biotin carboxylase (BC) catalyzes the carboxylation of biotin on its carrier protein (BCCP) and then the CO(2) group is transferred by the transcarboxylase to acetyl-CoA to form malonyl-CoA. This chain is Acetyl-coenzyme A carboxylase carboxyl transferase subunit beta, found in Bacillus anthracis (strain A0248).